A 79-amino-acid polypeptide reads, in one-letter code: MKESVIEKTAMVFGQMNEPPGARMRVALTGLTLAEYFRDVEGQDVLLFIDNIFRFTQAGSEVSALLGRMPSAVGYQPTL.

Belongs to the ATPase alpha/beta chains family. F-type ATPases have 2 components, CF(1) - the catalytic core - and CF(0) - the membrane proton channel. CF(1) has five subunits: alpha(3), beta(3), gamma(1), delta(1), epsilon(1). CF(0) has three main subunits: a(1), b(2) and c(9-12). The alpha and beta chains form an alternating ring which encloses part of the gamma chain. CF(1) is attached to CF(0) by a central stalk formed by the gamma and epsilon chains, while a peripheral stalk is formed by the delta and b chains.

Its subcellular location is the cell membrane. It catalyses the reaction ATP + H2O + 4 H(+)(in) = ADP + phosphate + 5 H(+)(out). Its function is as follows. Produces ATP from ADP in the presence of a proton gradient across the membrane. The catalytic sites are hosted primarily by the beta subunits. This Streptococcus downei (Streptococcus sobrinus) protein is ATP synthase subunit beta (atpD).